Reading from the N-terminus, the 209-residue chain is Small ribosomal subunit protein mS23 (209 aa).

The protein belongs to the mitochondrion-specific ribosomal protein mS23 family. Component of the mitochondrial small ribosomal subunit.

It is found in the mitochondrion. In Sclerotinia sclerotiorum (strain ATCC 18683 / 1980 / Ss-1) (White mold), this protein is Small ribosomal subunit protein mS23 (rsm25).